Here is a 366-residue protein sequence, read N- to C-terminus: Galactoside alpha-(1,2)-fucosyltransferase 1 (366 aa).

Residues 1–8 lie on the Cytoplasmic side of the membrane; sequence MWPLSHRH. A helical; Signal-anchor for type II membrane protein membrane pass occupies residues 9 to 25; the sequence is LCLAFLLVCVLSAISFF. Residues 26-366 are Lumenal-facing; the sequence is LHIHQDSIRH…LSPLWTLAEP (341 aa). N-linked (GlcNAc...) asparagine glycans are attached at residues N66, N302, and N328.

This sequence belongs to the glycosyltransferase 11 family.

It localises to the golgi apparatus. It is found in the golgi stack membrane. The catalysed reaction is a beta-D-galactosyl-(1-&gt;4)-N-acetyl-beta-D-glucosaminyl derivative + GDP-beta-L-fucose = an alpha-L-Fuc-(1-&gt;2)-beta-D-Gal-(1-&gt;4)-beta-D-GlcNAc derivative + GDP + H(+). It catalyses the reaction a ganglioside GA1 + GDP-beta-L-fucose = a ganglioside Fuc-GA1 + GDP + H(+). The enzyme catalyses a beta-D-Gal-(1-&gt;3)-beta-D-GlcNAc-(1-&gt;3)-beta-D-Gal-(1-&gt;4)-beta-D-Glc-(1&lt;-&gt;1')-Cer(d18:1(4E)) + GDP-beta-L-fucose = alpha-L-fucosyl-(1-&gt;2)- beta-D-galactosyl-(1-&gt;3)-N-acetyl-beta-D-glucosaminyl-(1-&gt;3)-beta-D-galactosyl-(1-&gt;4)-beta-D-glucosyl-(1&lt;-&gt;1')-N-acylsphing-4-enine + GDP + H(+). It carries out the reaction a neolactoside nLc4Cer(d18:1(4E)) + GDP-beta-L-fucose = a neolactoside IV(2)-alpha-Fuc-nLc4Cer(d18:1(4E)) + GDP + H(+). The catalysed reaction is a ganglioside GM1 + GDP-beta-L-fucose = a ganglioside Fuc-GM1 + GDP + H(+). It catalyses the reaction beta-D-galactosyl-(1-&gt;3)-N-acetyl-D-galactosamine + GDP-beta-L-fucose = alpha-L-fucosyl-(1-&gt;2)-beta-D-galactosyl-(1-&gt;3)-N-acetyl-D-galactosamine + GDP + H(+). The protein operates within protein modification; protein glycosylation. In terms of biological role, catalyzes the transfer of L-fucose, from a guanosine diphosphate-beta-L-fucose, to the terminal galactose residue of glycoconjugates through an alpha(1,2) linkage leading to H antigen synthesis that is an intermediate substrate in the synthesis of ABO blood group antigens. H antigen is essential for maturation of the glomerular layer of the main olfactory bulb, in cell migration and early cell-cell contacts during tumor associated angiogenesis. Preferentially fucosylates soluble lactose and to a lesser extent fucosylates glycolipids gangliosides GA1 and GM1a. This chain is Galactoside alpha-(1,2)-fucosyltransferase 1, found in Aotus azarae (Azara's night monkey).